A 327-amino-acid polypeptide reads, in one-letter code: Methionyl-tRNA formyltransferase (327 aa).

117-120 (SLLP) provides a ligand contact to (6S)-5,6,7,8-tetrahydrofolate.

The protein belongs to the Fmt family.

The catalysed reaction is L-methionyl-tRNA(fMet) + (6R)-10-formyltetrahydrofolate = N-formyl-L-methionyl-tRNA(fMet) + (6S)-5,6,7,8-tetrahydrofolate + H(+). Its function is as follows. Attaches a formyl group to the free amino group of methionyl-tRNA(fMet). The formyl group appears to play a dual role in the initiator identity of N-formylmethionyl-tRNA by promoting its recognition by IF2 and preventing the misappropriation of this tRNA by the elongation apparatus. This is Methionyl-tRNA formyltransferase from Delftia acidovorans (strain DSM 14801 / SPH-1).